Consider the following 954-residue polypeptide: MSLPLTEEQRKKIEENRQKALARRAEKLLAEQHQRTSSGTSIAGNPFQAKQGPSQNFPRESCKPVSHGVIFKQQNLSSSSNADQRPHDSHSFQAKGIWKKPEEMPTACPGHSPRSQMALTGISPPLAQSPPEVPKQQLLSYELGQGHAQASPEIRFTPFANPTHKPLAKPKSSQETPAHSSGQPPRDAKLEAKTAKASPSGQNISYIHSSSESVTPRTEGRLQQKSGSSVQKGVNSQKGKCVRNGDRFQVLIGYNAELIAVFKTLPSKNYDPDTKTWNFSMNDYSALMKAAQSLPTVNLQPLEWAYGSSESPSTSSEGQAGLPSAPSLSFVKGRCMLISRAYFEADISYSQDLIALFKQMDSRRYDVKTRKWSFLLEEHSKLIAKVRCLPQVQLDPLPTTLTLAFASQLKKTSLSLTPDVPEADLSEVDPKLVSNLMPFQRAGVNFAIAKGGRLLLADDMGLGKTIQAICIAAFYRKEWPLLVVVPSSVRFTWEQAFLRWLPSLSPDCINVVVTGKDRLTAGLINIVSFDLLSKLEKQLKTPFKVVIIDESHFLKNSRTARCRAAMPVLKVAKRVILLSGTPAMSRPAELYTQIIAVKPTFFPQFHAFGLRYCDAKRMPWGWDYSGSSNLGELKLLLEEAVMLRRLKSDVLSQLPAKQRKIVVIAPGRINARTRAALDAAAKEMTTKDKTKQQQKDALILFFNRTAEAKIPSVIEYILDLLESGREKFLVFAHHKVVLDAITQELERKHVQHIRIDGSTSSAEREDLCQQFQLSERHAVAVLSITAANMGLTFSSADLVVFAELFWNPGVLIQAEDRVHRIGQTSSVGIHYLVAKGTADDYLWPLIQEKIKVLAEAGLSETNFSEMTESTDYLYKDPKQQKIYDLFQKSFEKEGSDMELLEAAESFDPGSASGTSGSSSQNMGDTLDESSLTASPQKKRRFEFFDNWDSFTSPL.

Disordered regions lie at residues 1 to 20 (MSLP…RQKA) and 27 to 238 (KLLA…NSQK). Residue Ser2 is modified to N-acetylserine. Residues 3–34 (LPLTEEQRKKIEENRQKALARRAEKLLAEQHQ) are a coiled coil. The segment at 5-30 (LTEEQRKKIEENRQKALARRAEKLLA) is mediates interaction with RPA2. The segment covering 7 to 20 (EEQRKKIEENRQKA) has biased composition (basic and acidic residues). Residues 72–83 (KQQNLSSSSNAD) are compositionally biased toward polar residues. Residues Ser112, Ser123, Ser129, and Ser151 each carry the phosphoserine modification. Polar residues-rich tracts occupy residues 171-183 (KSSQ…SSGQ) and 197-238 (ASPS…NSQK). Ser198 bears the Phosphoserine mark. HARP domains follow at residues 226-303 (SGSS…QPLE) and 327-398 (SLSF…DPLP). In terms of domain architecture, Helicase ATP-binding spans 445–600 (NFAIAKGGRL…YTQIIAVKPT (156 aa)). An ATP-binding site is contributed by 458–465 (DDMGLGKT). The DESH box motif lies at 549–552 (DESH). The Nuclear localization signal signature appears at 644-661 (RRLKSDVLSQLPAKQRKI). The Helicase C-terminal domain maps to 716-869 (YILDLLESGR…ETNFSEMTES (154 aa)). The tract at residues 904-934 (ESFDPGSASGTSGSSSQNMGDTLDESSLTAS) is disordered. Residues 909–919 (GSASGTSGSSS) are compositionally biased toward low complexity. Residues 920-934 (QNMGDTLDESSLTAS) are compositionally biased toward polar residues.

This sequence belongs to the SNF2/RAD54 helicase family. SMARCAL1 subfamily. As to quaternary structure, interacts with RPA2; the interaction is direct and mediates the recruitment by the RPA complex of SMARCAL1 to sites of DNA damage. DNA damage-regulated phosphorylation by kinases that may include ATM, ATR and PRKDC. In terms of tissue distribution, ubiquitously expressed, with high levels in testis.

Its subcellular location is the nucleus. The enzyme catalyses ATP + H2O = ADP + phosphate + H(+). Its function is as follows. ATP-dependent annealing helicase that binds selectively to fork DNA relative to ssDNA or dsDNA and catalyzes the rewinding of the stably unwound DNA. Rewinds single-stranded DNA bubbles that are stably bound by replication protein A (RPA). Acts throughout the genome to reanneal stably unwound DNA, performing the opposite reaction of many enzymes, such as helicases and polymerases, that unwind DNA. May play an important role in DNA damage response by acting at stalled replication forks. The sequence is that of SWI/SNF-related matrix-associated actin-dependent regulator of chromatin subfamily A-like protein 1 from Homo sapiens (Human).